Reading from the N-terminus, the 218-residue chain is Glutathione S-transferase Mu 5 (218 aa).

Residues 2 to 88 (PMTLGYWDIR…YIARKHNLCG (87 aa)) enclose the GST N-terminal domain. Glutathione is bound by residues 7 to 8 (YW), 46 to 50 (WLNEK), 59 to 60 (NL), and 72 to 73 (QS). The region spanning 90-207 (TEEEKIRVDI…MKSSQFLRGL (118 aa)) is the GST C-terminal domain. A substrate-binding site is contributed by tyrosine 116.

The protein belongs to the GST superfamily. Mu family. As to quaternary structure, homodimer.

The protein localises to the cytoplasm. It catalyses the reaction RX + glutathione = an S-substituted glutathione + a halide anion + H(+). Functionally, conjugation of reduced glutathione to a wide number of exogenous and endogenous hydrophobic electrophiles. The chain is Glutathione S-transferase Mu 5 (GSTM5) from Homo sapiens (Human).